Consider the following 283-residue polypeptide: Pantothenate synthetase (283 aa).

Met-33–His-40 serves as a coordination point for ATP. His-40 (proton donor) is an active-site residue. Position 64 (Gln-64) interacts with (R)-pantoate. Gln-64 provides a ligand contact to beta-alanine. Residue Gly-150–Asp-153 coordinates ATP. A (R)-pantoate-binding site is contributed by Gln-156. Residues Ile-179 and Met-187–Arg-190 contribute to the ATP site.

The protein belongs to the pantothenate synthetase family. As to quaternary structure, homodimer.

The protein resides in the cytoplasm. The catalysed reaction is (R)-pantoate + beta-alanine + ATP = (R)-pantothenate + AMP + diphosphate + H(+). It functions in the pathway cofactor biosynthesis; (R)-pantothenate biosynthesis; (R)-pantothenate from (R)-pantoate and beta-alanine: step 1/1. Catalyzes the condensation of pantoate with beta-alanine in an ATP-dependent reaction via a pantoyl-adenylate intermediate. The protein is Pantothenate synthetase of Mesorhizobium japonicum (strain LMG 29417 / CECT 9101 / MAFF 303099) (Mesorhizobium loti (strain MAFF 303099)).